The primary structure comprises 188 residues: MGLKADSWIKKMSLEHGMINPFCEKQVGKNVISYGLSSYGYDIRVGSEFMLFDNKNALIDPKNFDPNNATKIDASKEGFFILPANAFALAHTIEYFKMPKDTLAICLGKSTYARCGIIVNVTPFEPEFEGYITIEISNTTNLPAKVYANEGIAQVVFLQGDEVCEQSYKDRGGKYQGQVGITLPKILK.

109 to 114 (KSTYAR) serves as a coordination point for dCTP. The active-site Proton donor/acceptor is glutamate 135. The dCTP site is built by glutamine 154, tyrosine 168, and glutamine 178.

This sequence belongs to the dCTP deaminase family. Homotrimer.

The catalysed reaction is dCTP + H2O + H(+) = dUTP + NH4(+). The protein operates within pyrimidine metabolism; dUMP biosynthesis; dUMP from dCTP (dUTP route): step 1/2. Catalyzes the deamination of dCTP to dUTP. The protein is dCTP deaminase of Helicobacter pylori (strain J99 / ATCC 700824) (Campylobacter pylori J99).